The chain runs to 352 residues: C-C chemokine receptor type 5 (352 aa).

At 1–30 the chain is on the extracellular side; that stretch reads MDYQVSSPTYDIDYYTSEPCQKVNVKQIAA. Residue Y3 is modified to Sulfotyrosine. 2 O-linked (GalNAc...) serine glycosylation sites follow: S6 and S7. 3 positions are modified to sulfotyrosine: Y10, Y14, and Y15. Cystine bridges form between C20-C269 and C101-C178. Residues 31–58 form a helical membrane-spanning segment; sequence RLLPPLYSLVFIFGFVGNILVVLILINC. Residues 59 to 68 lie on the Cytoplasmic side of the membrane; sequence KRLKSMTDIY. Residues 69 to 89 traverse the membrane as a helical segment; it reads LLNLAISDLFFLLTVPFWAHY. Topologically, residues 90–102 are extracellular; sequence AAAQWDFGNTMCQ. Residues 103–124 traverse the membrane as a helical segment; it reads LLTGLYFIGFFSGIFFIILLTI. Topologically, residues 125-141 are cytoplasmic; the sequence is DRYLAIVHAVFALKART. Residues 142–166 traverse the membrane as a helical segment; the sequence is VTFGVVTSVITWVVAVFASLPGIIF. Topologically, residues 167-198 are extracellular; the sequence is TRSQREGLHYTCSSHFPYSQYQFWKNFQTLKI. Residues 199–218 traverse the membrane as a helical segment; that stretch reads VILGLVLPLLVMVICYSGIL. The Cytoplasmic portion of the chain corresponds to 219 to 235; the sequence is KTLLRCRNEKKRHRAVR. The chain crosses the membrane as a helical span at residues 236–260; that stretch reads LIFTIMIVYFLFWAPYNIVLLLNTF. Residues 261–277 are Extracellular-facing; that stretch reads QEFFGLNNCSSSNRLDQ. The chain crosses the membrane as a helical span at residues 278–301; the sequence is AMQVTETLGMTHCCINPIIYAFVG. Over 302–352 the chain is Cytoplasmic; sequence EKFRNYLLVFFQKHIAKRFCKCCSIFQQEAPERASSVYTRSTGEQEISVGL. Residues C321, C323, and C324 are each lipidated (S-palmitoyl cysteine). Phosphoserine; by BARK1 occurs at positions 336, 337, 342, and 349.

This sequence belongs to the G-protein coupled receptor 1 family. As to quaternary structure, interacts with PRAF2. Efficient ligand binding to CCL3/MIP-1alpha and CCL4/MIP-1beta requires sulfation, O-glycosylation and sialic acid modifications. Glycosylation on Ser-6 is required for efficient binding of CCL4. Interacts with GRK2. Interacts with ARRB1 and ARRB2. Interacts with CNIH4. Interacts with S100A4; this interaction stimulates T-lymphocyte chemotaxis. In terms of processing, sulfated on at least 2 of the N-terminal tyrosines. Sulfation is required for efficient binding of the chemokines, CCL3 and CCL4. Palmitoylation in the C-terminal is important for cell surface expression. Post-translationally, phosphorylation on serine residues in the C-terminal is stimulated by binding CC chemokines especially by APO-RANTES. In terms of processing, O-glycosylated, but not N-glycosylated. Ser-6 appears to be the major site even if Ser-7 may be also O-glycosylated. Also sialylated glycans present which contribute to chemokine binding. Thr-16 and Ser-17 may also be glycosylated and, if so, with small moieties such as a T-antigen.

The protein localises to the cell membrane. Receptor for a number of inflammatory CC-chemokines including CCL3/MIP-1-alpha, CCL4/MIP-1-beta and RANTES and subsequently transduces a signal by increasing the intracellular calcium ion level. May play a role in the control of granulocytic lineage proliferation or differentiation. Participates in T-lymphocyte migration to the infection site by acting as a chemotactic receptor. This chain is C-C chemokine receptor type 5 (CCR5), found in Semnopithecus entellus (Northern plains gray langur).